The chain runs to 351 residues: DNA integrity scanning protein DisA (351 aa).

Residues 4–142 form the DAC domain; that stretch reads RSGFWQVLQQ…GPMKYILRDF (139 aa). ATP-binding positions include Gly71, Leu89, and 102–106; that span reads TRHRT.

It belongs to the DisA family. As to quaternary structure, homooctamer. Mg(2+) serves as cofactor.

It catalyses the reaction 2 ATP = 3',3'-c-di-AMP + 2 diphosphate. Its function is as follows. Participates in a DNA-damage check-point that is active prior to asymmetric division when DNA is damaged. DisA forms globular foci that rapidly scan along the chromosomes during sporulation, searching for lesions. When a lesion is present, DisA pauses at the lesion site. This triggers a cellular response that culminates in a temporary block in sporulation initiation. In terms of biological role, also has diadenylate cyclase activity, catalyzing the condensation of 2 ATP molecules into cyclic di-AMP (c-di-AMP). c-di-AMP acts as a signaling molecule that couples DNA integrity with progression of sporulation. The rise in c-di-AMP level generated by DisA while scanning the chromosome, operates as a positive signal that advances sporulation; upon encountering a lesion, the DisA focus arrests at the damaged site and halts c-di-AMP synthesis. The chain is DNA integrity scanning protein DisA from Symbiobacterium thermophilum (strain DSM 24528 / JCM 14929 / IAM 14863 / T).